The chain runs to 431 residues: Enolase (431 aa).

Residues 27-47 (LESGHSGRAAVPSGASTGSRE) are disordered. Gln-163 serves as a coordination point for (2R)-2-phosphoglycerate. Glu-205 (proton donor) is an active-site residue. Residues Asp-242, Glu-285, and Asp-312 each coordinate Mg(2+). The (2R)-2-phosphoglycerate site is built by Lys-337, Arg-366, Ser-367, and Lys-388. Lys-337 acts as the Proton acceptor in catalysis.

The protein belongs to the enolase family. Mg(2+) is required as a cofactor.

The protein localises to the cytoplasm. It is found in the secreted. Its subcellular location is the cell surface. The catalysed reaction is (2R)-2-phosphoglycerate = phosphoenolpyruvate + H2O. It participates in carbohydrate degradation; glycolysis; pyruvate from D-glyceraldehyde 3-phosphate: step 4/5. In terms of biological role, catalyzes the reversible conversion of 2-phosphoglycerate (2-PG) into phosphoenolpyruvate (PEP). It is essential for the degradation of carbohydrates via glycolysis. The polypeptide is Enolase (Oleidesulfovibrio alaskensis (strain ATCC BAA-1058 / DSM 17464 / G20) (Desulfovibrio alaskensis)).